Reading from the N-terminus, the 1025-residue chain is Exocyst complex component 6 (1025 aa).

2 stretches are compositionally biased toward basic and acidic residues: residues 1–10 (MSNKKQKEEI) and 22–52 (MVRD…ENVK). Disordered regions lie at residues 1 to 122 (MSNK…TRHL), 135 to 154 (LSSQ…DQAK), and 666 to 691 (QFGD…DENE). Residues 19 to 68 (LKTMVRDKDKEQKEEKREKKEKKRLEKKEAENVKKEKKKEKKELKKIGKA) are a coiled coil. Over residues 71–93 (SGSITSDSSTHSGAQEFDSYGND) the composition is skewed to low complexity. The segment covering 104 to 118 (SIDSNGLSSSGQPMQ) has biased composition (polar residues). 2 stretches are compositionally biased toward low complexity: residues 135 to 147 (LSSQ…LPHS) and 666 to 677 (QFGDKNLNNNNN). Residues 678-691 (NDDDDDYFDEDENE) show a composition bias toward acidic residues.

The protein belongs to the SEC15 family. The exocyst complex is composed of sec3/exoc1, sec5/exoc2, sec6/exoc3, sec8/exoc4, sec10/exoc5, sec15/exoc6, exo70/exoc7 and exo84/exoc8.

The protein localises to the cytoplasm. It is found in the perinuclear region. The protein resides in the midbody. It localises to the midbody ring. Functionally, component of the exocyst complex involved in the docking of exocytic vesicles with fusion sites on the plasma membrane. The chain is Exocyst complex component 6 (exoc6) from Dictyostelium discoideum (Social amoeba).